The primary structure comprises 255 residues: Aliphatic sulfonates import ATP-binding protein SsuB (255 aa).

Residues 5-231 enclose the ABC transporter domain; it reads IRVNEKAFGK…PRSRTSPVFQ (227 aa). Residue 39 to 46 coordinates ATP; it reads GPSGCGKS.

Belongs to the ABC transporter superfamily. Aliphatic sulfonates importer (TC 3.A.1.17.2) family. The complex is composed of two ATP-binding proteins (SsuB), two transmembrane proteins (SsuC) and a solute-binding protein (SsuA).

The protein resides in the cell membrane. The enzyme catalyses ATP + H2O + aliphatic sulfonate-[sulfonate-binding protein]Side 1 = ADP + phosphate + aliphatic sulfonateSide 2 + [sulfonate-binding protein]Side 1.. Part of the ABC transporter complex SsuABC involved in aliphatic sulfonates import. Responsible for energy coupling to the transport system. The sequence is that of Aliphatic sulfonates import ATP-binding protein SsuB from Bacillus licheniformis (strain ATCC 14580 / DSM 13 / JCM 2505 / CCUG 7422 / NBRC 12200 / NCIMB 9375 / NCTC 10341 / NRRL NRS-1264 / Gibson 46).